Here is a 249-residue protein sequence, read N- to C-terminus: Aspartate/glutamate leucyltransferase (249 aa).

The protein belongs to the R-transferase family. Bpt subfamily.

Its subcellular location is the cytoplasm. The enzyme catalyses N-terminal L-glutamyl-[protein] + L-leucyl-tRNA(Leu) = N-terminal L-leucyl-L-glutamyl-[protein] + tRNA(Leu) + H(+). It catalyses the reaction N-terminal L-aspartyl-[protein] + L-leucyl-tRNA(Leu) = N-terminal L-leucyl-L-aspartyl-[protein] + tRNA(Leu) + H(+). Its function is as follows. Functions in the N-end rule pathway of protein degradation where it conjugates Leu from its aminoacyl-tRNA to the N-termini of proteins containing an N-terminal aspartate or glutamate. This chain is Aspartate/glutamate leucyltransferase, found in Brucella anthropi (strain ATCC 49188 / DSM 6882 / CCUG 24695 / JCM 21032 / LMG 3331 / NBRC 15819 / NCTC 12168 / Alc 37) (Ochrobactrum anthropi).